A 105-amino-acid chain; its full sequence is Large ribosomal subunit protein uL24 (105 aa).

Belongs to the universal ribosomal protein uL24 family. In terms of assembly, part of the 50S ribosomal subunit.

Its function is as follows. One of two assembly initiator proteins, it binds directly to the 5'-end of the 23S rRNA, where it nucleates assembly of the 50S subunit. Functionally, one of the proteins that surrounds the polypeptide exit tunnel on the outside of the subunit. The chain is Large ribosomal subunit protein uL24 from Halorhodospira halophila (strain DSM 244 / SL1) (Ectothiorhodospira halophila (strain DSM 244 / SL1)).